Here is a 99-residue protein sequence, read N- to C-terminus: Leydig cell tumor 10 kDa protein homolog (99 aa).

Positions 1 to 37 (MAQGQRKFQARKPAKSKTAATASEKNRGPRKGGRVIA) are disordered. A compositionally biased stretch (basic residues) spans 28 to 37 (GPRKGGRVIA).

The protein belongs to the UPF0390 family.

In terms of biological role, may have a potential role in hypercalcemia of malignancy. The protein is Leydig cell tumor 10 kDa protein homolog of Pongo abelii (Sumatran orangutan).